The chain runs to 443 residues: MFLAQEIIRKKRNGLALCSEEIQFFVQGITTNSVSEGQIAALGMAVYFNDMNMDERIALTTAMRDSGTVLNWQSLELNGPVIDKHSTGGVGDVISLMLGPMAAACGGYVPMISGRGLGHTGGTLDKFDAIPGYQTEPSSELFRKVVKEVGVAIIGQTGDLVPADKRFYSIRDNTATVESISLITASILSKKLACNLDALAMDVKVGSGAFMPTYEASEELARSIAAVANGAGTKTTALLTDMNQVLASCAGNAVEVKEAIDFLTGAYRNPRLYEVTMGLCAEMLLLGGLASNEADARAKLNRVLDNGRAAELFGKMVSGLGGPADFVENYSKYLPQSQIIRPVFADMQGYAYSMDTRELGLAVVTLGGGRRKPGDALDYSVGLTQVCALGDKVDSSTPIAVIHAQSEAAFAEAELAVKKAIHIGETAPEKTPEIYAYIRASDL.

It belongs to the thymidine/pyrimidine-nucleoside phosphorylase family. Homodimer.

The enzyme catalyses thymidine + phosphate = 2-deoxy-alpha-D-ribose 1-phosphate + thymine. Its pathway is pyrimidine metabolism; dTMP biosynthesis via salvage pathway; dTMP from thymine: step 1/2. Functionally, the enzymes which catalyze the reversible phosphorolysis of pyrimidine nucleosides are involved in the degradation of these compounds and in their utilization as carbon and energy sources, or in the rescue of pyrimidine bases for nucleotide synthesis. This is Thymidine phosphorylase from Shewanella baltica (strain OS155 / ATCC BAA-1091).